Consider the following 158-residue polypeptide: Transcription antitermination protein NusB (158 aa).

This sequence belongs to the NusB family.

Its function is as follows. Involved in transcription antitermination. Required for transcription of ribosomal RNA (rRNA) genes. Binds specifically to the boxA antiterminator sequence of the ribosomal RNA (rrn) operons. In Bartonella henselae (strain ATCC 49882 / DSM 28221 / CCUG 30454 / Houston 1) (Rochalimaea henselae), this protein is Transcription antitermination protein NusB.